A 216-amino-acid chain; its full sequence is 3-isopropylmalate dehydratase small subunit (216 aa).

This sequence belongs to the LeuD family. LeuD type 1 subfamily. In terms of assembly, heterodimer of LeuC and LeuD.

The catalysed reaction is (2R,3S)-3-isopropylmalate = (2S)-2-isopropylmalate. It functions in the pathway amino-acid biosynthesis; L-leucine biosynthesis; L-leucine from 3-methyl-2-oxobutanoate: step 2/4. In terms of biological role, catalyzes the isomerization between 2-isopropylmalate and 3-isopropylmalate, via the formation of 2-isopropylmaleate. This is 3-isopropylmalate dehydratase small subunit from Albidiferax ferrireducens (strain ATCC BAA-621 / DSM 15236 / T118) (Rhodoferax ferrireducens).